A 295-amino-acid chain; its full sequence is tRNA dimethylallyltransferase (295 aa).

9-16 (GATATGKS) lines the ATP pocket. 11-16 (TATGKS) lines the substrate pocket. The tract at residues 34–37 (DSRQ) is interaction with substrate tRNA.

It belongs to the IPP transferase family. In terms of assembly, monomer. Requires Mg(2+) as cofactor.

It carries out the reaction adenosine(37) in tRNA + dimethylallyl diphosphate = N(6)-dimethylallyladenosine(37) in tRNA + diphosphate. Catalyzes the transfer of a dimethylallyl group onto the adenine at position 37 in tRNAs that read codons beginning with uridine, leading to the formation of N6-(dimethylallyl)adenosine (i(6)A). The sequence is that of tRNA dimethylallyltransferase from Nostoc sp. (strain PCC 7120 / SAG 25.82 / UTEX 2576).